Here is a 1033-residue protein sequence, read N- to C-terminus: Isoleucine--tRNA ligase 2 (1033 aa).

The short motif at 47–57 is the 'HIGH' region element; sequence PTANGLPHVGH. Residues 590–594 carry the 'KMSKS' region motif; sequence KMSKS. Lys593 provides a ligand contact to ATP.

The protein belongs to the class-I aminoacyl-tRNA synthetase family. IleS type 2 subfamily. Monomer. It depends on Zn(2+) as a cofactor.

The protein localises to the cytoplasm. The enzyme catalyses tRNA(Ile) + L-isoleucine + ATP = L-isoleucyl-tRNA(Ile) + AMP + diphosphate. In terms of biological role, catalyzes the attachment of isoleucine to tRNA(Ile). As IleRS can inadvertently accommodate and process structurally similar amino acids such as valine, to avoid such errors it has two additional distinct tRNA(Ile)-dependent editing activities. One activity is designated as 'pretransfer' editing and involves the hydrolysis of activated Val-AMP. The other activity is designated 'posttransfer' editing and involves deacylation of mischarged Val-tRNA(Ile). This Bacillus anthracis protein is Isoleucine--tRNA ligase 2.